We begin with the raw amino-acid sequence, 289 residues long: MNTDRITAFIKNGISARMPFYDTLPDMDLVFGKNHLPSLEYGANYFLQLSKINDINRLSTEMLSLYTHDLNKESDISKLFEPYNIKTIKSYGRSIQADAVVVDLRPSNSLYKNEHPYYKSNNYLKENNLYICDYTMITFEIYRPIFELSTEKTCIIKVPTLFGKTIVNAVRVYCSLFRYVKLYKLSADSWLKDSAIIVCQQPHAANINKFITYIRKVTKSQTWLDSNNVNFILIHDSVERVFIEKFLSFSYKIYESLYYVHSLLYSSMTSDLQSLDNEYQKKLIKLLRG.

Heterodimer of a large and a small subunit.

The protein resides in the virion. It catalyses the reaction a 5'-end (5'-triphosphoguanosine)-ribonucleoside in mRNA + S-adenosyl-L-methionine = a 5'-end (N(7)-methyl 5'-triphosphoguanosine)-ribonucleoside in mRNA + S-adenosyl-L-homocysteine. Its function is as follows. Catalyzes the last reaction in the mRNA cap formation pathway. This is mRNA-capping enzyme small subunit from Fowlpox virus (strain NVSL) (FPV).